The following is a 433-amino-acid chain: UDP-N-acetylglucosamine 1-carboxyvinyltransferase 1 (433 aa).

Residue 22 to 23 (KN) coordinates phosphoenolpyruvate. R95 contacts UDP-N-acetyl-alpha-D-glucosamine. The active-site Proton donor is C119. C119 carries the 2-(S-cysteinyl)pyruvic acid O-phosphothioketal modification. Residues 124–128 (RPVDL), D307, and V329 each bind UDP-N-acetyl-alpha-D-glucosamine.

The protein belongs to the EPSP synthase family. MurA subfamily.

It is found in the cytoplasm. It catalyses the reaction phosphoenolpyruvate + UDP-N-acetyl-alpha-D-glucosamine = UDP-N-acetyl-3-O-(1-carboxyvinyl)-alpha-D-glucosamine + phosphate. Its pathway is cell wall biogenesis; peptidoglycan biosynthesis. Functionally, cell wall formation. Adds enolpyruvyl to UDP-N-acetylglucosamine. The sequence is that of UDP-N-acetylglucosamine 1-carboxyvinyltransferase 1 from Latilactobacillus sakei subsp. sakei (strain 23K) (Lactobacillus sakei subsp. sakei).